The following is a 505-amino-acid chain: Glycerol kinase (505 aa).

ADP is bound at residue Thr-14. Residues Thr-14, Thr-15, and Ser-16 each contribute to the ATP site. Thr-14 contributes to the sn-glycerol 3-phosphate binding site. An ADP-binding site is contributed by Arg-18. The sn-glycerol 3-phosphate site is built by Arg-84, Glu-85, Tyr-136, and Asp-246. Residues Arg-84, Glu-85, Tyr-136, Asp-246, and Gln-247 each coordinate glycerol. Residues Thr-268 and Gly-311 each contribute to the ADP site. The ATP site is built by Thr-268, Gly-311, Gln-315, and Gly-412. 2 residues coordinate ADP: Gly-412 and Asn-416.

It belongs to the FGGY kinase family.

It carries out the reaction glycerol + ATP = sn-glycerol 3-phosphate + ADP + H(+). It participates in polyol metabolism; glycerol degradation via glycerol kinase pathway; sn-glycerol 3-phosphate from glycerol: step 1/1. Inhibited by fructose 1,6-bisphosphate (FBP). Key enzyme in the regulation of glycerol uptake and metabolism. Catalyzes the phosphorylation of glycerol to yield sn-glycerol 3-phosphate. This is Glycerol kinase from Vibrio vulnificus (strain CMCP6).